Reading from the N-terminus, the 238-residue chain is MAGHSKWANTKHRKERADHKKGKIFSRTIKELISAVKMGGPDPKSNARLRMIIQKAKDQNIPNENIERNLKKASSADQKNYEEVTYELYGFGGVGIIVEAMTDNKNRTASDMRVAVNKRGGALVEPGSVLYNFSRKGACYVPKSSIDEASLLTHVIDCGGEDLDSEDEEFFLVLCEPTDLASVKEALLAKGVTCSEEKMIYVPLRLVDCDEEAGKSNLALIEWLENIDDVDDVYHNMT.

A disordered region spans residues 1-21 (MAGHSKWANTKHRKERADHKK). The segment covering 9 to 21 (NTKHRKERADHKK) has biased composition (basic residues).

This sequence belongs to the TACO1 family.

It is found in the cytoplasm. In Chlamydia muridarum (strain MoPn / Nigg), this protein is Probable transcriptional regulatory protein TC_0742.